The following is a 159-amino-acid chain: Phosphopantetheine adenylyltransferase (159 aa).

Ser9 contacts substrate. Residues 9–10 (SF) and His17 each bind ATP. Substrate contacts are provided by Lys41, Leu73, and Lys87. ATP contacts are provided by residues 88–90 (GLR), Glu98, and 123–129 (YSYLSSS).

The protein belongs to the bacterial CoaD family. In terms of assembly, homohexamer. Requires Mg(2+) as cofactor.

Its subcellular location is the cytoplasm. It catalyses the reaction (R)-4'-phosphopantetheine + ATP + H(+) = 3'-dephospho-CoA + diphosphate. The protein operates within cofactor biosynthesis; coenzyme A biosynthesis; CoA from (R)-pantothenate: step 4/5. Its function is as follows. Reversibly transfers an adenylyl group from ATP to 4'-phosphopantetheine, yielding dephospho-CoA (dPCoA) and pyrophosphate. The chain is Phosphopantetheine adenylyltransferase from Clostridium botulinum (strain Alaska E43 / Type E3).